The primary structure comprises 638 residues: Threonine--tRNA ligase (638 aa).

The TGS domain occupies 1 to 61 (MPIITLPDGS…NKDSKVVIIT (61 aa)). A catalytic region spans residues 242–533 (DHRKLGKKHS…LIEQYEAKFP (292 aa)). Cysteine 333, histidine 384, and histidine 510 together coordinate Zn(2+).

The protein belongs to the class-II aminoacyl-tRNA synthetase family. Homodimer. Zn(2+) is required as a cofactor.

It localises to the cytoplasm. The enzyme catalyses tRNA(Thr) + L-threonine + ATP = L-threonyl-tRNA(Thr) + AMP + diphosphate + H(+). Its function is as follows. Catalyzes the attachment of threonine to tRNA(Thr) in a two-step reaction: L-threonine is first activated by ATP to form Thr-AMP and then transferred to the acceptor end of tRNA(Thr). Also edits incorrectly charged L-seryl-tRNA(Thr). This is Threonine--tRNA ligase from Prochlorococcus marinus (strain AS9601).